The primary structure comprises 38 residues: Large ribosomal subunit protein bL36 (38 aa).

It belongs to the bacterial ribosomal protein bL36 family.

This chain is Large ribosomal subunit protein bL36, found in Flavobacterium psychrophilum (strain ATCC 49511 / DSM 21280 / CIP 103535 / JIP02/86).